Consider the following 403-residue polypeptide: Aminomethyltransferase, mitochondrial (403 aa).

The transit peptide at 1-28 (MQRAMTVVPHLGLRLQALPLALGRPLSR) directs the protein to the mitochondrion. The substrate site is built by Glu-232, Arg-261, and Tyr-399.

Belongs to the GcvT family. The glycine cleavage system is composed of four proteins: P, T, L and H.

It is found in the mitochondrion. The enzyme catalyses N(6)-[(R)-S(8)-aminomethyldihydrolipoyl]-L-lysyl-[protein] + (6S)-5,6,7,8-tetrahydrofolate = N(6)-[(R)-dihydrolipoyl]-L-lysyl-[protein] + (6R)-5,10-methylene-5,6,7,8-tetrahydrofolate + NH4(+). Its function is as follows. The glycine cleavage system catalyzes the degradation of glycine. The protein is Aminomethyltransferase, mitochondrial of Canis lupus familiaris (Dog).